The primary structure comprises 181 residues: MDSGEVKISLEDSPSSGESFASTTSGPCCGSGRDLDIQVHESHIKDDQFPSRATSELQESKKSNKKCSSDLSTENSYAANKNVAEGLMDIALLSANANQLRFLITYNDKASTYIYSMIMVILSLVLQLLVGIMLIFKRRLKRFRNRSYERTNDLLVMGVFMITVINILLAAFTTTDGGGSH.

Over residues 1-10 (MDSGEVKISL) the composition is skewed to basic and acidic residues. The interval 1-72 (MDSGEVKISL…SNKKCSSDLS (72 aa)) is disordered. The Extracellular portion of the chain corresponds to 1–115 (MDSGEVKISL…YNDKASTYIY (115 aa)). The segment covering 12–26 (DSPSSGESFASTTSG) has biased composition (polar residues). Residues 33–49 (RDLDIQVHESHIKDDQF) show a composition bias toward basic and acidic residues. Positions 80–91 (NKNVAEGLMDIA) are helix alpha1. The interval 94 to 110 (SANANQLRFLITYNDKA) is helix alpha2. Residues 116–136 (SMIMVILSLVLQLLVGIMLIF) traverse the membrane as a helical segment. The Cytoplasmic portion of the chain corresponds to 137–153 (KRRLKRFRNRSYERTND). Residues 154-174 (LLVMGVFMITVINILLAAFTT) form a helical membrane-spanning segment. The Extracellular segment spans residues 175–181 (TDGGGSH).

It belongs to the ninjurin family.

Its subcellular location is the membrane. Functionally, effector of non-apoptotic necrotic cell death that mediates plasma membrane rupture (cytolysis): oligomerizes in response to death stimuli and promotes plasma membrane rupture by introducing hydrophilic faces of 2 alpha helices into the hydrophobic membrane, leading to release intracellular molecules that propagate the inflammatory response. Also acts as a homophilic transmembrane adhesion molecule that promotes cell adhesion by mediating homophilic interactions via its extracellular region. This is Ninjurin-B from Drosophila melanogaster (Fruit fly).